The sequence spans 49 residues: Lysozyme C (49 aa).

One can recognise a C-type lysozyme domain in the interval 1 to 49 (SKMKKCEFAKIAKEQHMDGYHGVSLADWVCLVNNESDFNTKAINRNKGI). Glutamate 35 is an active-site residue.

It belongs to the glycosyl hydrolase 22 family. As to quaternary structure, monomer.

Its subcellular location is the secreted. It carries out the reaction Hydrolysis of (1-&gt;4)-beta-linkages between N-acetylmuramic acid and N-acetyl-D-glucosamine residues in a peptidoglycan and between N-acetyl-D-glucosamine residues in chitodextrins.. Functionally, lysozymes have primarily a bacteriolytic function; those in tissues and body fluids are associated with the monocyte-macrophage system and enhance the activity of immunoagents. In Pseudocheirus peregrinus (Common ring-tailed possum), this protein is Lysozyme C (LYZ).